The following is a 437-amino-acid chain: MSGIPHDHYEPKTGIEKWLHDRLPIVGLVYDTIMIPTPKNLNWWWIWGIVLAFTLVLQIVTGIVLAIDYTPHVDLAFASVEHIMRDVNGGWAMRYIHANGASLFFLAVYIHIFRGLYYGSYKAPREITWIVGMVIYLLMMGTAFMGYVLPWGQMSFWGATVITGLFGAIPGIGPSIQAWLLGGPAVDNATLNRFFSLHYLLPFVIAALVAIHIWAFHTTGNNNPTGVEVRRTSKADAEKDTLPFWPYFVIKDLFALALVLLGFFAVVAYMPNYLGHPDNYIQANPLSTPAHIVPEWYFLPFYAILRAFAADVWVVILVDGLTFGIVDAKFFGVIAMFGAIAVMALAPWLDTSKVRSGAYRPKFRMWFWFLVLDFVVLTWVGAMPTEYPYDWISLIASTYWFAYFLVILPLLGATEKPEPIPASIEEDFNSHYGNPAE.

A helical transmembrane segment spans residues tryptophan 45–leucine 65. Heme b is bound by residues histidine 97 and histidine 111. The next 9 membrane-spanning stretches (helical) occupy residues glycine 100–serine 120, tryptophan 129–leucine 149, phenylalanine 156–isoleucine 176, phenylalanine 194–tryptophan 214, phenylalanine 248–alanine 268, phenylalanine 298–valine 318, phenylalanine 330–aspartate 350, methionine 365–threonine 385, and tryptophan 391–leucine 411. Heme b-binding residues include histidine 198 and histidine 212.

Belongs to the cytochrome b family. In terms of assembly, the main subunits of complex b-c1 are: cytochrome b, cytochrome c1 and the Rieske protein. It depends on heme b as a cofactor.

It is found in the cell membrane. Its function is as follows. Component of the ubiquinol-cytochrome c reductase complex (complex III or cytochrome b-c1 complex), which is a respiratory chain that generates an electrochemical potential coupled to ATP synthesis. The protein is Cytochrome b (petB) of Rhodobacter capsulatus (Rhodopseudomonas capsulata).